A 229-amino-acid polypeptide reads, in one-letter code: Large ribosomal subunit protein uL1 (229 aa).

This sequence belongs to the universal ribosomal protein uL1 family. In terms of assembly, part of the 50S ribosomal subunit.

Functionally, binds directly to 23S rRNA. The L1 stalk is quite mobile in the ribosome, and is involved in E site tRNA release. Protein L1 is also a translational repressor protein, it controls the translation of the L11 operon by binding to its mRNA. The protein is Large ribosomal subunit protein uL1 of Rhodopseudomonas palustris (strain BisB5).